Here is a 42-residue protein sequence, read N- to C-terminus: Conodipine-M beta chain (42 aa).

Heterodimer of an alpha and a beta chains; probably disulfide-linked. Expressed by the venom duct.

It localises to the secreted. In terms of biological role, heterodimer: conodipine-M catalyzes the calcium-dependent hydrolysis of the 2-acyl groups in 3-sn-phosphoglycerides. This activity may be supported by the alpha chain. Conodipine-M inhibits the binding of isradipine (a ligand specific for L-type calcium channel) to L-type calcium channels. This Conus magus (Magical cone) protein is Conodipine-M beta chain.